The sequence spans 734 residues: Photosystem I P700 chlorophyll a apoprotein A2 (734 aa).

8 helical membrane-spanning segments follow: residues 46–69 (IFASHFGQLAIIFLWTSGNLFHVA), 135–158 (LYTGALFLLFLSALSLIGGWLHLQ), 175–199 (LNHHLSGLFGVSSLAWTGHLVHVAI), 273–291 (MAHHHLAIAILFLIAGHMY), 330–353 (IHFQLGLALASLGVITSLVAQHMY), 369–395 (AALYTHHQYIAGFIMTGAFAHGAIFFI), 417–439 (AIISHLSWASLFLGFHTLGLYVH), and 517–535 (FLVHHAIALGLHTTTLILV). C559 and C568 together coordinate [4Fe-4S] cluster. Helical transmembrane passes span 575–596 (AFYLAVFWMLNTIGWVTFYWHW) and 643–665 (LSVWAWMFLFGHLVWATGFMFLI). 3 residues coordinate chlorophyll a: H654, M662, and Y670. Position 671 (W671) interacts with phylloquinone. The chain crosses the membrane as a helical span at residues 707–727 (LVGLAHFSVGYIFTYAAFLIA).

This sequence belongs to the PsaA/PsaB family. As to quaternary structure, the PsaA/B heterodimer binds the P700 chlorophyll special pair and subsequent electron acceptors. PSI consists of a core antenna complex that captures photons, and an electron transfer chain that converts photonic excitation into a charge separation. The eukaryotic PSI reaction center is composed of at least 11 subunits. P700 is a chlorophyll a/chlorophyll a' dimer, A0 is one or more chlorophyll a, A1 is one or both phylloquinones and FX is a shared 4Fe-4S iron-sulfur center. is required as a cofactor.

Its subcellular location is the plastid. The protein resides in the chloroplast thylakoid membrane. The catalysed reaction is reduced [plastocyanin] + hnu + oxidized [2Fe-2S]-[ferredoxin] = oxidized [plastocyanin] + reduced [2Fe-2S]-[ferredoxin]. Functionally, psaA and PsaB bind P700, the primary electron donor of photosystem I (PSI), as well as the electron acceptors A0, A1 and FX. PSI is a plastocyanin-ferredoxin oxidoreductase, converting photonic excitation into a charge separation, which transfers an electron from the donor P700 chlorophyll pair to the spectroscopically characterized acceptors A0, A1, FX, FA and FB in turn. Oxidized P700 is reduced on the lumenal side of the thylakoid membrane by plastocyanin. This Lobularia maritima (Sweet alyssum) protein is Photosystem I P700 chlorophyll a apoprotein A2.